The chain runs to 170 residues: MKTLSIEPLTRAAFAPFGDVIETQGAKQIPINLGTTMRFHDLAKIDVADEGGRPLVNLFRGQPRTLPFEVTMLERHPLGSQAFVPLTDRPYIVVVAPAGDLDASKIRAFVTSGWQGVNYAKGVWHHPLIALGEVSDFIVVDRGGDGRNLNEQNLPESLWLTDDALLAVGA.

This sequence belongs to the ureidoglycolate lyase family. As to quaternary structure, homodimer. Ni(2+) is required as a cofactor.

It carries out the reaction (S)-ureidoglycolate = urea + glyoxylate. Its pathway is nitrogen metabolism; (S)-allantoin degradation. Functionally, catalyzes the catabolism of the allantoin degradation intermediate (S)-ureidoglycolate, generating urea and glyoxylate. Involved in the utilization of allantoin as nitrogen source. This is Ureidoglycolate lyase from Burkholderia mallei (strain NCTC 10247).